The primary structure comprises 217 residues: FMN-dependent NADH:quinone oxidoreductase (217 aa).

FMN contacts are provided by residues serine 10, 17 to 19 (SAS), and 137 to 140 (SRGG).

This sequence belongs to the azoreductase type 1 family. As to quaternary structure, homodimer. Requires FMN as cofactor.

The enzyme catalyses 2 a quinone + NADH + H(+) = 2 a 1,4-benzosemiquinone + NAD(+). It catalyses the reaction N,N-dimethyl-1,4-phenylenediamine + anthranilate + 2 NAD(+) = 2-(4-dimethylaminophenyl)diazenylbenzoate + 2 NADH + 2 H(+). Functionally, quinone reductase that provides resistance to thiol-specific stress caused by electrophilic quinones. Also exhibits azoreductase activity. Catalyzes the reductive cleavage of the azo bond in aromatic azo compounds to the corresponding amines. In Streptomyces avermitilis (strain ATCC 31267 / DSM 46492 / JCM 5070 / NBRC 14893 / NCIMB 12804 / NRRL 8165 / MA-4680), this protein is FMN-dependent NADH:quinone oxidoreductase.